A 178-amino-acid chain; its full sequence is Protein GrpE (178 aa).

The interval 1–26 (MQDQDKYAEQAASMEEPASADAPAIV) is disordered.

It belongs to the GrpE family. In terms of assembly, homodimer.

It is found in the cytoplasm. Participates actively in the response to hyperosmotic and heat shock by preventing the aggregation of stress-denatured proteins, in association with DnaK and GrpE. It is the nucleotide exchange factor for DnaK and may function as a thermosensor. Unfolded proteins bind initially to DnaJ; upon interaction with the DnaJ-bound protein, DnaK hydrolyzes its bound ATP, resulting in the formation of a stable complex. GrpE releases ADP from DnaK; ATP binding to DnaK triggers the release of the substrate protein, thus completing the reaction cycle. Several rounds of ATP-dependent interactions between DnaJ, DnaK and GrpE are required for fully efficient folding. The protein is Protein GrpE of Herminiimonas arsenicoxydans.